The following is a 966-amino-acid chain: MDAGARYMRLTGKENWVEVTMDGEKERKREGFTAGQQGKYNPQVSKNIGNRNTNDCFAYKGIFLWRISLTMWILLGINMCVSAEDYITLISDPYGFSPIKNVSGVPVTCVTKEFAKWGCQPLGAYPDPEIEYRNVSQEVVKEVYQENWPWNTYHWPLWQMENVRYWLKENMQENQQRKNNTKEGIEELLAGTIRGRFCVPYPFALLKCTKWCWYTAAINNESGKAGKIKINCTEARAVSCTEDMPLASIQRAYWDEKDRESMAFMNIKACDSNLRCQKRPGGCMEGYPIPVGAEIIPESMKYLRGAKSQYGGIKDKNGELKLPLTLRVWVKLANVSEWVNGTPPDWQDRINGSKGINGTLWGELNSMHHLGFALSQNGKWCNYTGEIKLGQETFQYHYKPNWNCTGNWTQYPVWQVIRNLDMVEHMTGECVQRPQRHNITVGNGTITGNCSTTNWDGCNCSRSGNYLYNSSEGGLLLILCRQNSTLTRILGTNTNWTTMWGIYKNCSGCENATLDNTGEGTLGGVANKNCSLPHKNESNKWTCAPRQRDGKTDSLYIAGGKKFWTRIKAQFSCESNIGQLDGMLHQQILLQKYQVIKVRAYTYGVIEMPENYAKTRIINRKKRELSHKRKKRGVGLVIMLVIMAIVAAAGASLGVANAIQQSYTKAAVQTLANATAAQQDVLEATYAMVQHVAKGVRILEARVARVEAITDRIMLYQELDCWHYHQYCITSTKTEVAKYINWTRFKDNCTWQQWERGLQGYDTNLTILLKESAAMTQLAEEQARRIPEVWESLKDVFDWSGWFSWLKYIPIIVVGLLGCILIRAVICVCQPLVEIYRTLSTPTYQRVTVIMETRADVAGENQDFGDGLEESDNSETSERVTVQKAWSRAWELWQNSPWKEPWKRGLLRLLVLPLTMGIWINGWLGEHHKNKKRKGGLETWHKKGTDIGLGQIPVDHLWCYKKSKSL.

Positions 1–83 (MDAGARYMRL…LLGINMCVSA (83 aa)) are cleaved as a signal peptide. Over 84–801 (EDYITLISDP…SLKDVFDWSG (718 aa)) the chain is Extracellular. N-linked (GlcNAc...) asparagine; by host glycans are attached at residues asparagine 101, asparagine 134, asparagine 179, asparagine 220, asparagine 231, asparagine 334, asparagine 351, asparagine 357, asparagine 382, asparagine 403, asparagine 407, asparagine 438, asparagine 443, asparagine 449, asparagine 459, asparagine 469, asparagine 483, asparagine 495, asparagine 505, asparagine 511, asparagine 529, and asparagine 536. The fusion peptide stretch occupies residues 633–653 (GVGLVIMLVIMAIVAAAGASL). Coiled-coil stretches lie at residues 665–715 (KAAV…RIML) and 756–791 (RGLQ…EVWE). The interval 699–715 (LEARVARVEAITDRIML) is immunosuppression. A helical membrane pass occupies residues 802-822 (WFSWLKYIPIIVVGLLGCILI). Residues 823–966 (RAVICVCQPL…LWCYKKSKSL (144 aa)) lie on the Cytoplasmic side of the membrane.

As to quaternary structure, the mature envelope protein (Env) consists of a trimer of SU-TM heterodimers attached by noncovalent interactions or by a labile interchain disulfide bond. Specific enzymatic cleavages in vivo yield mature proteins. Envelope glycoproteins are synthesized as an inactive precursor that is N-glycosylated and processed likely by host cell furin or by a furin-like protease in the Golgi to yield the mature SU and TM proteins. The cleavage site between SU and TM requires the minimal sequence [KR]-X-[KR]-R.

Its subcellular location is the virion membrane. It is found in the host cell membrane. Functionally, the surface protein (SU) attaches the virus to the host cell by binding to its receptor. This interaction triggers the refolding of the transmembrane protein (TM) and is thought to activate its fusogenic potential by unmasking its fusion peptide. Fusion occurs at the host cell plasma membrane. Its function is as follows. The transmembrane protein (TM) acts as a class I viral fusion protein. Under the current model, the protein has at least 3 conformational states: pre-fusion native state, pre-hairpin intermediate state, and post-fusion hairpin state. During viral and target cell membrane fusion, the coiled coil regions (heptad repeats) assume a trimer-of-hairpins structure, positioning the fusion peptide in close proximity to the C-terminal region of the ectodomain. The formation of this structure appears to drive apposition and subsequent fusion of viral and target cell membranes. Membranes fusion leads to delivery of the nucleocapsid into the cytoplasm. The protein is Envelope glycoprotein (env) of Caprine arthritis encephalitis virus (strain Cork) (CAEV-Co).